The following is a 205-amino-acid chain: Small ribosomal subunit protein uS4 (205 aa).

Basic and acidic residues predominate over residues 1-16 (MSKRESSKYKIDRRMG). Positions 1 to 46 (MSKRESSKYKIDRRMGENIWGRPKSPVNRREYGPGQHGQRRKSKLS) are disordered. The region spanning 94-157 (SRLDAIVYRA…KQLVTVLEAV (64 aa)) is the S4 RNA-binding domain.

It belongs to the universal ribosomal protein uS4 family. As to quaternary structure, part of the 30S ribosomal subunit. Contacts protein S5. The interaction surface between S4 and S5 is involved in control of translational fidelity.

Functionally, one of the primary rRNA binding proteins, it binds directly to 16S rRNA where it nucleates assembly of the body of the 30S subunit. Its function is as follows. With S5 and S12 plays an important role in translational accuracy. The protein is Small ribosomal subunit protein uS4 of Sinorhizobium medicae (strain WSM419) (Ensifer medicae).